The sequence spans 219 residues: 7-carboxy-7-deazaguanine synthase (219 aa).

Substrate contacts are provided by residues 22–24 (IQG) and arginine 37. Residues 28 to 219 (LVGLPSVFIR…PQVHKCFDLK (192 aa)) enclose the Radical SAM core domain. Residues cysteine 41, cysteine 45, and cysteine 48 each coordinate [4Fe-4S] cluster. Threonine 81 contributes to the substrate binding site. S-adenosyl-L-methionine is bound by residues glycine 83 and 130–132 (SPK).

The protein belongs to the radical SAM superfamily. 7-carboxy-7-deazaguanine synthase family. Homodimer. It depends on [4Fe-4S] cluster as a cofactor. S-adenosyl-L-methionine is required as a cofactor. The cofactor is Mg(2+).

The catalysed reaction is 6-carboxy-5,6,7,8-tetrahydropterin + H(+) = 7-carboxy-7-deazaguanine + NH4(+). The protein operates within purine metabolism; 7-cyano-7-deazaguanine biosynthesis. Its function is as follows. Catalyzes the complex heterocyclic radical-mediated conversion of 6-carboxy-5,6,7,8-tetrahydropterin (CPH4) to 7-carboxy-7-deazaguanine (CDG), a step common to the biosynthetic pathways of all 7-deazapurine-containing compounds. This is 7-carboxy-7-deazaguanine synthase from Aquifex aeolicus (strain VF5).